A 160-amino-acid chain; its full sequence is Xanthine-guanine phosphoribosyltransferase (160 aa).

5-phospho-alpha-D-ribose 1-diphosphate contacts are provided by residues Arg41–Gly42 and Asp93–Thr101. Mg(2+) is bound at residue Asp94. 2 residues coordinate guanine: Asp97 and Ile140. Xanthine-binding residues include Asp97 and Ile140. GMP contacts are provided by residues Asp97–Thr101 and Trp139–Ile140.

The protein belongs to the purine/pyrimidine phosphoribosyltransferase family. XGPT subfamily. In terms of assembly, homotetramer. Mg(2+) serves as cofactor.

It localises to the cell inner membrane. The enzyme catalyses GMP + diphosphate = guanine + 5-phospho-alpha-D-ribose 1-diphosphate. It carries out the reaction XMP + diphosphate = xanthine + 5-phospho-alpha-D-ribose 1-diphosphate. It catalyses the reaction IMP + diphosphate = hypoxanthine + 5-phospho-alpha-D-ribose 1-diphosphate. Its pathway is purine metabolism; GMP biosynthesis via salvage pathway; GMP from guanine: step 1/1. It participates in purine metabolism; XMP biosynthesis via salvage pathway; XMP from xanthine: step 1/1. Functionally, purine salvage pathway enzyme that catalyzes the transfer of the ribosyl-5-phosphate group from 5-phospho-alpha-D-ribose 1-diphosphate (PRPP) to the N9 position of the 6-oxopurines guanine and xanthine to form the corresponding ribonucleotides GMP (guanosine 5'-monophosphate) and XMP (xanthosine 5'-monophosphate), with the release of PPi. To a lesser extent, also acts on hypoxanthine. The chain is Xanthine-guanine phosphoribosyltransferase from Desulfotalea psychrophila (strain LSv54 / DSM 12343).